The primary structure comprises 197 residues: Imidazoleglycerol-phosphate dehydratase (197 aa).

The protein belongs to the imidazoleglycerol-phosphate dehydratase family.

The protein resides in the cytoplasm. It catalyses the reaction D-erythro-1-(imidazol-4-yl)glycerol 3-phosphate = 3-(imidazol-4-yl)-2-oxopropyl phosphate + H2O. It participates in amino-acid biosynthesis; L-histidine biosynthesis; L-histidine from 5-phospho-alpha-D-ribose 1-diphosphate: step 6/9. This is Imidazoleglycerol-phosphate dehydratase from Erythrobacter litoralis (strain HTCC2594).